The chain runs to 463 residues: RuvB-like 2 (463 aa).

N-acetylalanine is present on alanine 2. A Glycyl lysine isopeptide (Lys-Gly) (interchain with G-Cter in SUMO2) cross-link involves residue lysine 9. Glycine 77–threonine 84 serves as a coordination point for ATP. Serine 437 bears the Phosphoserine mark. Residues lysine 444 and lysine 456 each participate in a glycyl lysine isopeptide (Lys-Gly) (interchain with G-Cter in SUMO2) cross-link.

Belongs to the RuvB family. In terms of assembly, forms homohexameric rings. Can form a dodecamer with RUVBL1 made of two stacked hexameric rings; however, even though RUVBL1 and RUVBL2 are present in equimolar ratio, the oligomeric status of each hexamer is not known. Oligomerization may regulate binding to nucleic acids and conversely, binding to nucleic acids may affect the dodecameric assembly. Interaction of the complex with DHX34 results in conformational changes of the N-terminus of the RUVBL2 subunits, resulting in loss of nucleotide binding ability and ATP hydrolysis of the complex. Interacts with the transcriptional activation domain of MYC. Interacts with ATF2. Component of the RNA polymerase II holoenzyme complex. May also act to bridge the LEF1/TCF1-CTNNB1 complex and TBP. Component of the NuA4 histone acetyltransferase complex which contains the catalytic subunit KAT5/TIP60 and the subunits EP400, TRRAP/PAF400, BRD8/SMAP, EPC1, DMAP1/DNMAP1, RUVBL1/TIP49, RUVBL2, ING3, actin, ACTL6A/BAF53A, MORF4L1/MRG15, MORF4L2/MRGX, MRGBP, YEATS4/GAS41, VPS72/YL1 and MEAF6. The NuA4 complex interacts with MYC and the adenovirus E1A protein. RUVBL2 interacts with EP400. Component of a NuA4-related complex which contains EP400, TRRAP/PAF400, SRCAP, BRD8/SMAP, EPC1, DMAP1/DNMAP1, RUVBL1/TIP49, RUVBL2, actin, ACTL6A/BAF53A, VPS72 and YEATS4/GAS41. Interacts with NPAT. Component of the chromatin-remodeling INO80 complex; specifically part of a complex module associated with the helicase ATP-binding and the helicase C-terminal domain of INO80. Component of some MLL1/MLL complex, at least composed of the core components KMT2A/MLL1, ASH2L, HCFC1/HCF1, WDR5 and RBBP5, as well as the facultative components BACC1, CHD8, E2F6, HSP70, INO80C, KANSL1, LAS1L, MAX, MCRS1, MGA, MYST1/MOF, PELP1, PHF20, PRP31, RING2, RUVB1/TIP49A, RUVB2/TIP49B, SENP3, TAF1, TAF4, TAF6, TAF7, TAF9 and TEX10. Interacts with IGHMBP2. Interacts with TELO2. Interacts with HINT1. Component of a SWR1-like complex. Component of the R2TP complex composed at least of RUVBL1, RUVBL2, RPAP3 and PIHD1. Component of the PAQosome complex which is responsible for the biogenesis of several protein complexes and which consists of R2TP complex members RUVBL1, RUVBL2, RPAP3 and PIH1D1, URI complex members PFDN2, PFDN6, PDRG1, UXT and URI1 as well as ASDURF, POLR2E and DNAAF10/WDR92. Interacts with ITFG1. Interacts with ZMYND10. Interacts with WAC; WAC positively regulates MTOR activity by promoting the assembly of the TTT complex composed of TELO2, TTI1 and TTI2 and the RUVBL complex composed of RUVBL1 and RUVBL2 into the TTT-RUVBL complex which leads to the dimerization of the mTORC1 complex and its subsequent activation. Forms a complex with APPL1 and APPL2. Interacts with ZNHIT2 (via HIT-type zinc finger) in the presence of ATP or ADP; shows a stronger interaction in the presence of ADP. The RUVBL1/RUVBL2 complex interacts with ZNHIT1 (via HIT-type zinc finger), ZNHIT3 (via HIT-type zinc finger), ZNHIT6 (via HIT-type zinc finger) and DDX59/ZNHIT5 (via HIT-type zinc finger) in the presence of ADP. Interacts with NOPCHAP1; the interaction is direct and disrupted upon ATP binding. Interacts with SMG1.

The protein resides in the nucleus matrix. The protein localises to the nucleus. Its subcellular location is the nucleoplasm. It localises to the cytoplasm. It is found in the membrane. The protein resides in the dynein axonemal particle. The enzyme catalyses ATP + H2O = ADP + phosphate + H(+). In terms of biological role, possesses single-stranded DNA-stimulated ATPase and ATP-dependent DNA helicase (5' to 3') activity; hexamerization is thought to be critical for ATP hydrolysis and adjacent subunits in the ring-like structure contribute to the ATPase activity. Component of the NuA4 histone acetyltransferase complex which is involved in transcriptional activation of select genes principally by acetylation of nucleosomal histones H4 and H2A. This modification may both alter nucleosome-DNA interactions and promote interaction of the modified histones with other proteins which positively regulate transcription. This complex may be required for the activation of transcriptional programs associated with oncogene and proto-oncogene mediated growth induction, tumor suppressor mediated growth arrest and replicative senescence, apoptosis, and DNA repair. The NuA4 complex ATPase and helicase activities seem to be, at least in part, contributed by the association of RUVBL1 and RUVBL2 with EP400. NuA4 may also play a direct role in DNA repair when recruited to sites of DNA damage. Component of a SWR1-like complex that specifically mediates the removal of histone H2A.Z/H2AZ1 from the nucleosome. Proposed core component of the chromatin remodeling INO80 complex which exhibits DNA- and nucleosome-activated ATPase activity and catalyzes ATP-dependent nucleosome sliding. Plays an essential role in oncogenic transformation by MYC and also modulates transcriptional activation by the LEF1/TCF1-CTNNB1 complex. May also inhibit the transcriptional activity of ATF2. Involved in the endoplasmic reticulum (ER)-associated degradation (ERAD) pathway where it negatively regulates expression of ER stress response genes. May play a role in regulating the composition of the U5 snRNP complex. This Bos taurus (Bovine) protein is RuvB-like 2 (RUVBL2).